A 244-amino-acid chain; its full sequence is 1-(5-phosphoribosyl)-5-[(5-phosphoribosylamino)methylideneamino] imidazole-4-carboxamide isomerase (244 aa).

Asp-8 acts as the Proton acceptor in catalysis. Asp-129 (proton donor) is an active-site residue.

The protein belongs to the HisA/HisF family.

The protein localises to the cytoplasm. The catalysed reaction is 1-(5-phospho-beta-D-ribosyl)-5-[(5-phospho-beta-D-ribosylamino)methylideneamino]imidazole-4-carboxamide = 5-[(5-phospho-1-deoxy-D-ribulos-1-ylimino)methylamino]-1-(5-phospho-beta-D-ribosyl)imidazole-4-carboxamide. It participates in amino-acid biosynthesis; L-histidine biosynthesis; L-histidine from 5-phospho-alpha-D-ribose 1-diphosphate: step 4/9. In Maricaulis maris (strain MCS10) (Caulobacter maris), this protein is 1-(5-phosphoribosyl)-5-[(5-phosphoribosylamino)methylideneamino] imidazole-4-carboxamide isomerase.